Reading from the N-terminus, the 404-residue chain is Zinc metalloprotease Rip1 (404 aa).

Residues 1–21 traverse the membrane as a helical segment; that stretch reads MMFVTGIVLFALAILISVALH. His-21 serves as a coordination point for Zn(2+). Glu-22 is an active-site residue. His-25 is a Zn(2+) binding site. Residues 104–124 traverse the membrane as a helical segment; sequence PGMNLAICLVLIYAIALVWGL. The PDZ domain occupies 121-203; that stretch reads VWGLPNLHPP…SVPIVVERDG (83 aa). Asp-202 is a Zn(2+) binding site. A run of 2 helical transmembrane segments spans residues 313–333 and 373–393; these read LWVA…AINL and LLPA…LTVT.

It belongs to the peptidase M50B family. Requires Zn(2+) as cofactor.

It is found in the cell membrane. Functionally, a probable site-2 protease (S2P) that cleaves type-2 transmembrane proteins within their membrane-spanning domains. Degrades anti-sigma factors RskA, RslA and RsmA, releasing sigma factors SigK, SigL and SigM from the cellular membrane, activating signaling pathways. Does not act on RsdA. Regulates the composition of extractable mycolic acids in the cell envelope in response to changes in membrane fluidity. Mediates transcriptional regulation of mycolic acid biosynthetic genes in response to detergent. Probably also cleaves PbpB (PBP3, FtsI); this cleavage is inhibited by Wag31-PbpBI interaction. Regulated intramembrane proteolysis (RIP) occurs when an extracytoplasmic signal (possibly oxidative stress) triggers a concerted proteolytic cascade to transmit information and elicit cellular responses. The membrane-spanning regulatory substrate protein (includes anti-sigma factors RskA, RslA, RsmA, and PbpB) is first cut extracytoplasmically (site-1 protease, S1P), then within the membrane itself (site-2 protease, S2P, this entry), while cytoplasmic proteases finish degrading the regulatory protein, liberating the effector protein (ECF sigma factors SigK, SigL and SigM). This Mycobacterium tuberculosis (strain ATCC 35801 / TMC 107 / Erdman) protein is Zinc metalloprotease Rip1 (rip1).